The primary structure comprises 248 residues: 1-(5-phosphoribosyl)-5-[(5-phosphoribosylamino)methylideneamino] imidazole-4-carboxamide isomerase (248 aa).

D8 serves as the catalytic Proton acceptor. The Proton donor role is filled by D131.

This sequence belongs to the HisA/HisF family.

It is found in the cytoplasm. It catalyses the reaction 1-(5-phospho-beta-D-ribosyl)-5-[(5-phospho-beta-D-ribosylamino)methylideneamino]imidazole-4-carboxamide = 5-[(5-phospho-1-deoxy-D-ribulos-1-ylimino)methylamino]-1-(5-phospho-beta-D-ribosyl)imidazole-4-carboxamide. It participates in amino-acid biosynthesis; L-histidine biosynthesis; L-histidine from 5-phospho-alpha-D-ribose 1-diphosphate: step 4/9. The sequence is that of 1-(5-phosphoribosyl)-5-[(5-phosphoribosylamino)methylideneamino] imidazole-4-carboxamide isomerase from Paracidovorax citrulli (strain AAC00-1) (Acidovorax citrulli).